The following is a 352-amino-acid chain: uncharacterized protein (352 aa).

The protein to Synechocystis PCC 6803 slr0039.

This is an uncharacterized protein from Archaeoglobus fulgidus (strain ATCC 49558 / DSM 4304 / JCM 9628 / NBRC 100126 / VC-16).